We begin with the raw amino-acid sequence, 87 residues long: Small ribosomal subunit protein bS20 (87 aa).

Belongs to the bacterial ribosomal protein bS20 family.

Functionally, binds directly to 16S ribosomal RNA. The polypeptide is Small ribosomal subunit protein bS20 (Rhizorhabdus wittichii (strain DSM 6014 / CCUG 31198 / JCM 15750 / NBRC 105917 / EY 4224 / RW1) (Sphingomonas wittichii)).